A 183-amino-acid chain; its full sequence is MTGNIVSRRYAKALFSVGQKQGEEDLAAYGLALTELSQILEDSPEALRLFQNPVFSADEKKAVLEKLLEKTSAGPVVKNFCSLLADKGRLPVIPEIASDYAGMLDNVQGVVRGKLVTAIKLTVKRQKEIKTRLEEQLKSKLELDFAMDKDILGGVVLQVGDKVLDASIRAQLQMMKEQIKRGV.

It belongs to the ATPase delta chain family. In terms of assembly, F-type ATPases have 2 components, F(1) - the catalytic core - and F(0) - the membrane proton channel. F(1) has five subunits: alpha(3), beta(3), gamma(1), delta(1), epsilon(1). F(0) has three main subunits: a(1), b(2) and c(10-14). The alpha and beta chains form an alternating ring which encloses part of the gamma chain. F(1) is attached to F(0) by a central stalk formed by the gamma and epsilon chains, while a peripheral stalk is formed by the delta and b chains.

Its subcellular location is the cell inner membrane. Its function is as follows. F(1)F(0) ATP synthase produces ATP from ADP in the presence of a proton or sodium gradient. F-type ATPases consist of two structural domains, F(1) containing the extramembraneous catalytic core and F(0) containing the membrane proton channel, linked together by a central stalk and a peripheral stalk. During catalysis, ATP synthesis in the catalytic domain of F(1) is coupled via a rotary mechanism of the central stalk subunits to proton translocation. Functionally, this protein is part of the stalk that links CF(0) to CF(1). It either transmits conformational changes from CF(0) to CF(1) or is implicated in proton conduction. The protein is ATP synthase subunit delta of Maridesulfovibrio salexigens (strain ATCC 14822 / DSM 2638 / NCIMB 8403 / VKM B-1763) (Desulfovibrio salexigens).